We begin with the raw amino-acid sequence, 518 residues long: ESX-3 secretion system ATPase EccB3 (518 aa).

Residues 1–26 (MTGPVNPDDRRSFSSRTPVNENPDGV) form a disordered region. A helical transmembrane segment spans residues 71-91 (VLTGALILVTGLVGCFIFSLF).

Belongs to the EccB family. As to quaternary structure, part of the ESX-3 / type VII secretion system (T7SS), which is composed of cytosolic and membrane components. The ESX-3 membrane complex is composed of EccB3, EccC3, EccD3 and EccE3.

It localises to the cell inner membrane. An ATPase. Part of the ESX-3 specialized secretion system, which is required for siderophore-mediated iron acquisition and for the secretion of EsxH and EsxG. This Mycolicibacterium smegmatis (strain ATCC 700084 / mc(2)155) (Mycobacterium smegmatis) protein is ESX-3 secretion system ATPase EccB3.